Consider the following 511-residue polypeptide: LEM domain-containing protein 2 (511 aa).

Residue Ala2 is modified to N-acetylalanine. The LEM domain occupies 2–42 (AGLSDLELRRELQALGFQPGPITDTTRNVYRNKLRRLRGEA). 2 disordered regions span residues 18–110 (FQPG…SDAS) and 128–206 (GLSY…AGRT). The span at 38–80 (LRGEARLRDDERLREDAGPREDAGPRGPERQREEARLREEAPL) shows a compositional bias: basic and acidic residues. Positions 80-112 (LRARPAASVLRSEPWPLSPSPPAPSAASDASGP) are interaction with lamin A/C complexes. A required for nuclear retention and interaction with LMNA isoform C region spans residues 80–141 (LRARPAASVL…PPHAGPGPLR (62 aa)). 2 stretches are compositionally biased toward low complexity: residues 81–94 (RARPAASVLRSEPW) and 172–183 (APPSASARPHSA). 2 helical membrane passes run 221–241 (LLLWASLGLLLGFLAILWVKM) and 385–405 (VTHVLIFFWCLAFLWGLLILL). Residues 403–511 (ILLKYRWRKL…KPSSFSDSER (109 aa)) are winged-Helix (WH). 3 positions are modified to phosphoserine: Ser505, Ser507, and Ser509.

Interacts (via N-terminus) with LMNA isoform C (via C-terminus) (in vitro). Interacts (via LEM domain) with BANF1. Interacts (via C-terminus) with CHMP7. Interacts (via N-terminus) with tubulin; the interaction causes microtubule bundling and stabilization (in vitro). Phosphorylated; strongly phosphorylated in mitosis compared to G1/S. As to expression, ubiquitously expressed, including liver, brain, heart, skeletal muscle, lung, testis, spleen, kidney and white adipose tissue.

The protein resides in the nucleus inner membrane. It is found in the nucleus envelope. The protein localises to the cytoplasm. It localises to the cytoskeleton. Its subcellular location is the spindle. In terms of biological role, nuclear lamina-associated inner nuclear membrane protein that is involved in nuclear structure organization and maintenance of nuclear envelope (NE) integrity and NE reformation after mitosis. Plays a role as transmembrane adapter for the endosomal sorting complexes required for transport (ESCRT), and is thereby involved in ESCRT-mediated NE reformation. Promotes ESCRT-mediated NE closure by recruiting CHMP7 and downstream ESCRT-III proteins IST1/CHMP8 and CHMP2A to the reforming NE during anaphase. During nuclear reassembly, condenses into a liquid-like coating around microtubule spindles and coassembles with CHMP7 to form a macromolecular O-ring seal at the confluence between membranes, chromatin, and the spindle to facilitate early nuclear sealing. Plays a role in the organization of heterochromatin associated with the NE and in the maintenance of NE organization under mechanical stress. Required for embryonic development and is involved in regulation of several signaling pathways such as MAPK and AKT. Required for myoblast differentiation involving regulation of ERK signaling. Essential for cardiac homeostasis and proper heart function. This Mus musculus (Mouse) protein is LEM domain-containing protein 2 (Lemd2).